The chain runs to 205 residues: Holliday junction branch migration complex subunit RuvA (205 aa).

Positions 1-64 (MIGRLRGTLA…EDAHLLYGFA (64 aa)) are domain I. The tract at residues 65-143 (EKRERELFRE…AWETSPAMFT (79 aa)) is domain II. The interval 144–154 (LVSDGPLPVAS) is flexible linker. A domain III region spans residues 154 to 205 (SESSAEADAVSALVSLGYKPQEASKAIAAIKDKAGLSSEELIRRSLKGMIAK).

This sequence belongs to the RuvA family. Homotetramer. Forms an RuvA(8)-RuvB(12)-Holliday junction (HJ) complex. HJ DNA is sandwiched between 2 RuvA tetramers; dsDNA enters through RuvA and exits via RuvB. An RuvB hexamer assembles on each DNA strand where it exits the tetramer. Each RuvB hexamer is contacted by two RuvA subunits (via domain III) on 2 adjacent RuvB subunits; this complex drives branch migration. In the full resolvosome a probable DNA-RuvA(4)-RuvB(12)-RuvC(2) complex forms which resolves the HJ.

The protein resides in the cytoplasm. Its function is as follows. The RuvA-RuvB-RuvC complex processes Holliday junction (HJ) DNA during genetic recombination and DNA repair, while the RuvA-RuvB complex plays an important role in the rescue of blocked DNA replication forks via replication fork reversal (RFR). RuvA specifically binds to HJ cruciform DNA, conferring on it an open structure. The RuvB hexamer acts as an ATP-dependent pump, pulling dsDNA into and through the RuvAB complex. HJ branch migration allows RuvC to scan DNA until it finds its consensus sequence, where it cleaves and resolves the cruciform DNA. This Pseudomonas entomophila (strain L48) protein is Holliday junction branch migration complex subunit RuvA.